The chain runs to 159 residues: NADH-quinone oxidoreductase subunit I (159 aa).

2 consecutive 4Fe-4S ferredoxin-type domains span residues 51 to 80 (RRYENGEERCIACKLCEAICPAQAIVIEAD) and 90 to 119 (TRYDIDMTKCIYCGLCQAACPVDAIVEGPN). 8 residues coordinate [4Fe-4S] cluster: C60, C63, C66, C70, C99, C102, C105, and C109.

It belongs to the complex I 23 kDa subunit family. NDH-1 is composed of 14 different subunits. Subunits NuoA, H, J, K, L, M, N constitute the membrane sector of the complex. Requires [4Fe-4S] cluster as cofactor.

Its subcellular location is the cell inner membrane. The enzyme catalyses a quinone + NADH + 5 H(+)(in) = a quinol + NAD(+) + 4 H(+)(out). In terms of biological role, NDH-1 shuttles electrons from NADH, via FMN and iron-sulfur (Fe-S) centers, to quinones in the respiratory chain. The immediate electron acceptor for the enzyme in this species is believed to be ubiquinone. Couples the redox reaction to proton translocation (for every two electrons transferred, four hydrogen ions are translocated across the cytoplasmic membrane), and thus conserves the redox energy in a proton gradient. The polypeptide is NADH-quinone oxidoreductase subunit I (Rickettsia massiliae (strain Mtu5)).